The sequence spans 549 residues: Oxygen-dependent choline dehydrogenase (549 aa).

An FAD-binding site is contributed by 4–33 (DFVIIGSGSAGSALAYRLSEDGRNSVIVLE). The Proton acceptor role is filled by histidine 465.

It belongs to the GMC oxidoreductase family. It depends on FAD as a cofactor.

It localises to the cell membrane. The enzyme catalyses choline + A = betaine aldehyde + AH2. It carries out the reaction betaine aldehyde + NAD(+) + H2O = glycine betaine + NADH + 2 H(+). Its pathway is amine and polyamine biosynthesis; betaine biosynthesis via choline pathway; betaine aldehyde from choline (cytochrome c reductase route): step 1/1. Functionally, involved in the biosynthesis of the osmoprotectant glycine betaine. Catalyzes the oxidation of choline to betaine aldehyde and betaine aldehyde to glycine betaine at the same rate. The chain is Oxygen-dependent choline dehydrogenase from Rhizobium meliloti (strain 1021) (Ensifer meliloti).